Reading from the N-terminus, the 238-residue chain is Protein odd-skipped-related 2 (238 aa).

Residues 105–126 (EDPPVTGQSRLSPERRPARGRL) are disordered. C2H2-type zinc fingers lie at residues 134-156 (FICR…ERTH), 162-184 (YTCD…RYIH), and 190-212 (FKCQ…KTLH).

The protein belongs to the Odd C2H2-type zinc-finger protein family. In terms of tissue distribution, at the 8-somite stage, expressed in the pronephros, with weak generalized expression elsewhere. At 24 hpf, expressed in the kidney tubules and the anterior duct, and also in the gut. At 60 hpf, expressed in the tubules and the pectoral fin buds.

The protein resides in the nucleus. Transcriptional repressor. Required for pronephric kidney development. This Danio rerio (Zebrafish) protein is Protein odd-skipped-related 2.